Reading from the N-terminus, the 132-residue chain is Putative F-box protein At4g05620 (132 aa).

The region spanning Q17–R63 is the F-box domain.

The polypeptide is Putative F-box protein At4g05620 (Arabidopsis thaliana (Mouse-ear cress)).